A 416-amino-acid polypeptide reads, in one-letter code: Creatine kinase U-type, mitochondrial (416 aa).

A mitochondrion-targeting transit peptide spans 1–39; sequence MAGPFSRLLSARPGLRLLALAGAGSLAAGFLLRPEPIRA. Positions 40–63 are cardiolipin-binding; that stretch reads ASERRRQYPPSAEYPDLRKHNNCM. Residues 44-131 form the Phosphagen kinase N-terminal domain; it reads RRQYPPSAEY…FDPVIQERHN (88 aa). Position 151 is a phosphoserine (Ser-151). The region spanning 158–400 is the Phosphagen kinase C-terminal domain; the sequence is YVLSSRVRTG…NYLIDCERRL (243 aa). 161-165 is a binding site for ATP; the sequence is SSRVR. Ser-196 carries the post-translational modification Phosphoserine. Thr-213 carries the post-translational modification Phosphothreonine. ATP is bound at residue His-224. Position 232 is a phosphoserine (Ser-232). ATP-binding positions include Arg-269, Arg-325, and 353-358; that span reads RGTGGV. Residue Thr-355 is modified to Phosphothreonine. Ser-365 carries the post-translational modification Phosphoserine. Asp-368 provides a ligand contact to ATP.

Belongs to the ATP:guanido phosphotransferase family. As to quaternary structure, exists as an octamer composed of four MTCK homodimers.

It localises to the mitochondrion inner membrane. The catalysed reaction is creatine + ATP = N-phosphocreatine + ADP + H(+). In terms of biological role, reversibly catalyzes the transfer of phosphate between ATP and various phosphogens (e.g. creatine phosphate). Creatine kinase isoenzymes play a central role in energy transduction in tissues with large, fluctuating energy demands, such as skeletal muscle, heart, brain and spermatozoa. The sequence is that of Creatine kinase U-type, mitochondrial (CKMT1) from Sus scrofa (Pig).